The sequence spans 261 residues: DNA repair protein RecO (261 aa).

Belongs to the RecO family.

Involved in DNA repair and RecF pathway recombination. The protein is DNA repair protein RecO of Mycobacteroides abscessus (strain ATCC 19977 / DSM 44196 / CCUG 20993 / CIP 104536 / JCM 13569 / NCTC 13031 / TMC 1543 / L948) (Mycobacterium abscessus).